The sequence spans 362 residues: Protein RecA (362 aa).

Position 77–84 (Gly77–Thr84) interacts with ATP.

The protein belongs to the RecA family.

The protein localises to the cytoplasm. Its function is as follows. Can catalyze the hydrolysis of ATP in the presence of single-stranded DNA, the ATP-dependent uptake of single-stranded DNA by duplex DNA, and the ATP-dependent hybridization of homologous single-stranded DNAs. It interacts with LexA causing its activation and leading to its autocatalytic cleavage. This Allorhizobium ampelinum (strain ATCC BAA-846 / DSM 112012 / S4) (Agrobacterium vitis (strain S4)) protein is Protein RecA.